The primary structure comprises 147 residues: Hemoglobin subunit beta-3 (147 aa).

In terms of domain architecture, Globin spans 3-147 (HWTAEEKAVI…LVDALSHSYH (145 aa)). Positions 64 and 93 each coordinate heme b.

It belongs to the globin family. Heterotetramer of two alpha chains and two beta chains. In terms of tissue distribution, red blood cells.

This is a tadpole (larval) beta chain. This chain is Hemoglobin subunit beta-3, found in Aquarana catesbeiana (American bullfrog).